Here is an 83-residue protein sequence, read N- to C-terminus: Small ribosomal subunit protein bS18 (83 aa).

The protein belongs to the bacterial ribosomal protein bS18 family. In terms of assembly, part of the 30S ribosomal subunit. Forms a tight heterodimer with protein bS6.

Functionally, binds as a heterodimer with protein bS6 to the central domain of the 16S rRNA, where it helps stabilize the platform of the 30S subunit. This is Small ribosomal subunit protein bS18 from Methylobacterium sp. (strain 4-46).